The chain runs to 173 residues: Large ribosomal subunit protein uL22c (173 aa).

Belongs to the universal ribosomal protein uL22 family. In terms of assembly, part of the 50S ribosomal subunit.

Its subcellular location is the plastid. The protein resides in the chloroplast. Its function is as follows. This protein binds specifically to 23S rRNA. Functionally, the globular domain of the protein is located near the polypeptide exit tunnel on the outside of the subunit, while an extended beta-hairpin is found that lines the wall of the exit tunnel in the center of the 70S ribosome. The protein is Large ribosomal subunit protein uL22c (rpl22) of Drimys granadensis.